A 473-amino-acid chain; its full sequence is Deoxyribodipyrimidine photo-lyase (473 aa).

Residues 2–134 (PTHLVWFRRD…ICEGFDDSVI (133 aa)) form the Photolyase/cryptochrome alpha/beta domain. Residues Asn-109 and Glu-110 each contribute to the (6R)-5,10-methylene-5,6,7,8-tetrahydrofolate site. Residue Tyr-224 participates in FAD binding. Arg-228 provides a ligand contact to DNA. Residue 236 to 240 (TSRLS) coordinates FAD. 2 interaction with DNA regions span residues 276-283 (ELIWREFY) and 343-344 (NR). Position 374-376 (374-376 (DGD)) interacts with FAD. DNA is bound at residue Gln-406.

The protein belongs to the DNA photolyase class-1 family. As to quaternary structure, monomer. Requires FAD as cofactor. The cofactor is (6R)-5,10-methylene-5,6,7,8-tetrahydrofolate.

The enzyme catalyses cyclobutadipyrimidine (in DNA) = 2 pyrimidine residues (in DNA).. Functionally, involved in repair of UV radiation-induced DNA damage. Catalyzes the light-dependent monomerization (300-600 nm) of cyclobutyl pyrimidine dimers (in cis-syn configuration), which are formed between adjacent bases on the same DNA strand upon exposure to ultraviolet radiation. This is Deoxyribodipyrimidine photo-lyase (phrB) from Salmonella typhimurium (strain LT2 / SGSC1412 / ATCC 700720).